Reading from the N-terminus, the 374-residue chain is Queuine tRNA-ribosyltransferase (374 aa).

The Proton acceptor role is filled by D89. Substrate contacts are provided by residues D89–F93, D143, Q187, and G214. Residues G245–D251 form an RNA binding region. The Nucleophile role is filled by D264. The segment at T269–R273 is RNA binding; important for wobble base 34 recognition. Zn(2+) is bound by residues C302, C304, C307, and H333.

The protein belongs to the queuine tRNA-ribosyltransferase family. Homodimer. Within each dimer, one monomer is responsible for RNA recognition and catalysis, while the other monomer binds to the replacement base PreQ1. Zn(2+) is required as a cofactor.

It catalyses the reaction 7-aminomethyl-7-carbaguanine + guanosine(34) in tRNA = 7-aminomethyl-7-carbaguanosine(34) in tRNA + guanine. The protein operates within tRNA modification; tRNA-queuosine biosynthesis. In terms of biological role, catalyzes the base-exchange of a guanine (G) residue with the queuine precursor 7-aminomethyl-7-deazaguanine (PreQ1) at position 34 (anticodon wobble position) in tRNAs with GU(N) anticodons (tRNA-Asp, -Asn, -His and -Tyr). Catalysis occurs through a double-displacement mechanism. The nucleophile active site attacks the C1' of nucleotide 34 to detach the guanine base from the RNA, forming a covalent enzyme-RNA intermediate. The proton acceptor active site deprotonates the incoming PreQ1, allowing a nucleophilic attack on the C1' of the ribose to form the product. After dissociation, two additional enzymatic reactions on the tRNA convert PreQ1 to queuine (Q), resulting in the hypermodified nucleoside queuosine (7-(((4,5-cis-dihydroxy-2-cyclopenten-1-yl)amino)methyl)-7-deazaguanosine). This Shewanella baltica (strain OS223) protein is Queuine tRNA-ribosyltransferase.